Here is a 418-residue protein sequence, read N- to C-terminus: Protein-lysine 6-oxidase (418 aa).

The signal sequence occupies residues 1–20 (MRFAWTALLGSLQLCALVRC). Positions 21 to 169 (APPAASHRQP…NRVEVDGMVG (149 aa)) are cleaved as a propeptide — removed by BMP1. A disordered region spans residues 63-84 (YQPQRRRDPGATAPGAANATAP). Residues 72 to 84 (GATAPGAANATAP) are compositionally biased toward low complexity. 3 N-linked (GlcNAc...) asparagine glycosylation sites follow: Asn-80, Asn-96, and Asn-143. Positions 130–175 (TSGAHDAGTSRADNQTAPGEVPTLSNLRPPNRVEVDGMVGDDPYNP) are disordered. Residues 140 to 157 (RADNQTAPGEVPTLSNLR) show a composition bias toward polar residues. Tyr-188 bears the Sulfotyrosine mark. The tract at residues 214–418 (PDLVPDPYYI…YASGCTISPY (205 aa)) is lysyl-oxidase like. 5 disulfide bridges follow: Cys-239/Cys-245, Cys-292/Cys-341, Cys-325/Cys-331, Cys-352/Cys-362, and Cys-399/Cys-413. Cu cation is bound by residues His-293, His-295, and His-297. Residues 321–356 (KASFCLEDTSCDYGYHRRFACTAHTQGLSPGCYDTY) constitute a cross-link (lysine tyrosylquinone (Lys-Tyr)). Tyr-356 is modified (2',4',5'-topaquinone).

Belongs to the lysyl oxidase family. In terms of assembly, interacts with MFAP4. Interacts (via propeptide) with EFEMP2; this interaction is strong and facilitates formation of ternary complexes with ELN during elastic fiber assembly; this interaction limits interaction of EFEMP2 with FBLN5. It depends on Cu cation as a cofactor. Lysine tyrosylquinone residue serves as cofactor. In terms of processing, the lysine tyrosylquinone cross-link (LTQ) is generated by condensation of the epsilon-amino group of a lysine with a topaquinone produced by oxidation of tyrosine. Proteolytically cleaved by BMP1 which removes the propeptide. Also proteolytically cleaved by ADAMTS2 and ADAMTS14, but not by ADAMTS3, at an additional cleavage site downstream of the BMP1 cleavage site. The propeptide plays a role in directing the deposition of this enzyme to elastic fibers, via interaction with tropoelastin. Cleavage by BMP1 to remove the propeptide does not increase enzymatic activity but increases binding to collagen. Cleavage by ADAMTS2 produces a form with reduced collagen-binding activity. Post-translationally, sulfated at Tyr-188 and also at either Tyr-184 or Tyr-185 which enhances binding to collagen.

The protein localises to the secreted. The protein resides in the extracellular space. It carries out the reaction L-lysyl-[protein] + O2 + H2O = (S)-2-amino-6-oxohexanoyl-[protein] + H2O2 + NH4(+). Responsible for the post-translational oxidative deamination of peptidyl lysine residues in precursors to fibrous collagen and elastin. Regulator of Ras expression. May play a role in tumor suppression. Plays a role in the aortic wall architecture. The protein is Protein-lysine 6-oxidase of Bos taurus (Bovine).